Consider the following 583-residue polypeptide: Aspartate--tRNA ligase (583 aa).

E174 contacts L-aspartate. Residues 198–201 (QTFK) form an aspartate region. Residue R220 participates in L-aspartate binding. ATP contacts are provided by residues 220–222 (RDE) and Q229. H445 contributes to the L-aspartate binding site. E479 lines the ATP pocket. R486 lines the L-aspartate pocket. Position 531-534 (531-534 (GLDR)) interacts with ATP.

It belongs to the class-II aminoacyl-tRNA synthetase family. Type 1 subfamily. In terms of assembly, homodimer.

It localises to the cytoplasm. The enzyme catalyses tRNA(Asp) + L-aspartate + ATP = L-aspartyl-tRNA(Asp) + AMP + diphosphate. Catalyzes the attachment of L-aspartate to tRNA(Asp) in a two-step reaction: L-aspartate is first activated by ATP to form Asp-AMP and then transferred to the acceptor end of tRNA(Asp). This chain is Aspartate--tRNA ligase, found in Flavobacterium psychrophilum (strain ATCC 49511 / DSM 21280 / CIP 103535 / JIP02/86).